A 302-amino-acid polypeptide reads, in one-letter code: CASP-like protein 4A2 (302 aa).

Residues 1–13 (MALQAQQQATPSP) are compositionally biased toward polar residues. Positions 1–134 (MALQAQQQAT…APPPHAQVRS (134 aa)) are disordered. Residues 1-154 (MALQAQQQAT…RKRRAAVMQR (154 aa)) lie on the Cytoplasmic side of the membrane. Residues 40-60 (VVVASTHHAAAAARYVPPRAT) show a composition bias toward low complexity. The span at 99 to 129 (KTPPPAPPLPAAPPPPPAASPAPAPRAPPPH) shows a compositional bias: pro residues. The chain crosses the membrane as a helical span at residues 155–175 (AALLARAAAAGLCLAALAVLA). Residues 176–197 (SDTRRGWARDSYSNYAQFRYSE) lie on the Extracellular side of the membrane. A helical transmembrane segment spans residues 198–218 (AVNVVGFLYSVFQFVALAELM). The Cytoplasmic portion of the chain corresponds to 219-238 (RRNKHLIPHPKRDLFDFTMD). A helical transmembrane segment spans residues 239–256 (QVVAYLLISSSSSATARA). Topologically, residues 257–273 (SDLIENWGSDSFPSMAN) are extracellular. The chain crosses the membrane as a helical span at residues 274–294 (GSIAISFVAFVVFAICSLISA). Topologically, residues 295–302 (YNLFRRDM) are cytoplasmic.

This sequence belongs to the Casparian strip membrane proteins (CASP) family. Homodimer and heterodimers.

The protein localises to the cell membrane. In Zea mays (Maize), this protein is CASP-like protein 4A2.